Reading from the N-terminus, the 506-residue chain is Fe(3+)-transport system permease protein FbpB 2 (506 aa).

The next 12 membrane-spanning stretches (helical) occupy residues 9–29 (LTLL…YVIL), 57–77 (LLMV…AFLL), 90–110 (VAMT…WISL), 116–136 (VFWG…YLPV), 174–194 (IGSS…AVSI), 218–238 (ALLS…EIFF), 275–295 (IFIL…IVGT), 314–334 (FIIS…LVWA), 350–370 (PYLL…YFSI), 379–399 (TFFV…QTTL), 428–448 (LTLP…FLNL), and 480–500 (AAAT…VFLL). The region spanning 52–233 (LSNTMLLMVC…LMAICILIVF (182 aa)) is the ABC transmembrane type-1 1 domain. The ABC transmembrane type-1 2 domain maps to 310–500 (FSNSFIISGL…LFSGIPVFLL (191 aa)).

It belongs to the binding-protein-dependent transport system permease family. FbpB subfamily. In terms of assembly, the complex is composed of two ATP-binding proteins (FbpC), two transmembrane proteins (FbpB) and a solute-binding protein (FbpA).

The protein localises to the cell inner membrane. In terms of biological role, part of the ABC transporter complex FbpABC (TC 3.A.1.10.1) involved in Fe(3+) ions import. Probably responsible for the translocation of the substrate across the membrane. The polypeptide is Fe(3+)-transport system permease protein FbpB 2 (fbpB2) (Haemophilus influenzae (strain ATCC 51907 / DSM 11121 / KW20 / Rd)).